The primary structure comprises 257 residues: Zinc transporter ZupT (257 aa).

8 consecutive transmembrane segments (helical) span residues leucine 5–glycine 25, leucine 33–leucine 53, glycine 61–leucine 81, alanine 109–valine 129, leucine 137–alanine 157, isoleucine 171–isoleucine 191, leucine 195–leucine 215, and glycine 236–isoleucine 256. Residues asparagine 120 and glutamate 123 each contribute to the Fe(2+) site. The Zn(2+) site is built by glutamate 123 and histidine 148. The Fe(2+) site is built by asparagine 149, glutamate 152, and glutamate 181. Glutamate 152 is a binding site for Zn(2+).

It belongs to the ZIP transporter (TC 2.A.5) family. ZupT subfamily.

The protein resides in the cell inner membrane. The catalysed reaction is Zn(2+)(in) = Zn(2+)(out). Functionally, mediates zinc uptake. May also transport other divalent cations. The polypeptide is Zinc transporter ZupT (Salmonella paratyphi A (strain ATCC 9150 / SARB42)).